Reading from the N-terminus, the 320-residue chain is MLGKEEEQQYGQNGKGMENELPFMKRPWFKKAYENAIEFHEKDELLDARDRLELSKAYRSIAKAEMWGGWLGFSAVFLTPFAYRYYKTKAIKGVKVPRNFVLGVMALFFATNFAGRSMYTRQLNERDPTGVLKDNYSNKYGDNDFGAFQHDQTKEIPRNQRQYNMMRLLDSGSPSRWSMYFYITYQNPERRLPDPKVKLQQMKKGGVFNGSPFMNQRDPIGLYRNKGRKSPDPIEGEQNDSPVLSSWEKIRNGDNSSSSSWENIRNTSRDQSQESDASVDHESDIFISGFSDDGNATDNSSSDDKYQRLLQSGRYGGNRS.

Helical transmembrane passes span 66–85 (MWGG…AYRY) and 100–119 (FVLG…RSMY). Residues 205 to 320 (GGVFNGSPFM…QSGRYGGNRS (116 aa)) are disordered. Phosphoserine is present on S230. Over residues 253-266 (GDNSSSSSWENIRN) the composition is skewed to polar residues. Residues 267–284 (TSRDQSQESDASVDHESD) are compositionally biased toward basic and acidic residues.

It belongs to the PUP1 family.

The protein localises to the mitochondrion membrane. This is PUP1 protein homolog from Saccharomyces cerevisiae (strain ATCC 204508 / S288c) (Baker's yeast).